The chain runs to 376 residues: Putative peptide import ATP-binding protein BMEII0205 (376 aa).

The tract at residues 1-25 (MPLRPALHLRTGKLRQTPTHNEPDG) is disordered. Residues 64–314 (VRTDDLVRDF…PLHPYSRALL (251 aa)) enclose the ABC transporter domain. 106 to 113 (GESGSGKS) provides a ligand contact to ATP.

Belongs to the ABC transporter superfamily. In terms of assembly, the complex is composed of two ATP-binding proteins (BMEII0205 and BMEII0206), two transmembrane proteins (BMEII0207/BMEII0208 and BMEII0209) and a solute-binding protein (BMEII0210).

The protein resides in the cell inner membrane. In terms of biological role, probably part of an ABC transporter complex that could be involved in peptide import. Probably responsible for energy coupling to the transport system. The sequence is that of Putative peptide import ATP-binding protein BMEII0205 from Brucella melitensis biotype 1 (strain ATCC 23456 / CCUG 17765 / NCTC 10094 / 16M).